A 252-amino-acid chain; its full sequence is Flap endonuclease Xni (252 aa).

Residue Asp-105 coordinates Mg(2+). Residues 161-251 form the 5'-3' exonuclease domain; the sequence is VESTQFIDYL…NVNLKQFRIE (91 aa). K(+) contacts are provided by Leu-172, Ala-173, Pro-181, Val-183, and Ile-186. The segment at 185–190 is interaction with DNA; it reads GIGPKS.

This sequence belongs to the Xni family. Mg(2+) serves as cofactor. Requires K(+) as cofactor.

Has flap endonuclease activity. During DNA replication, flap endonucleases cleave the 5'-overhanging flap structure that is generated by displacement synthesis when DNA polymerase encounters the 5'-end of a downstream Okazaki fragment. The chain is Flap endonuclease Xni from Shewanella halifaxensis (strain HAW-EB4).